A 100-amino-acid polypeptide reads, in one-letter code: NADH-quinone oxidoreductase subunit K 2 (100 aa).

3 helical membrane passes run 4–24 (LNNY…GVLV), 29–49 (IVIF…FIAF), and 60–80 (IFVF…LALM).

This sequence belongs to the complex I subunit 4L family. In terms of assembly, NDH-1 is composed of 14 different subunits. Subunits NuoA, H, J, K, L, M, N constitute the membrane sector of the complex.

Its subcellular location is the cell inner membrane. It carries out the reaction a quinone + NADH + 5 H(+)(in) = a quinol + NAD(+) + 4 H(+)(out). Its function is as follows. NDH-1 shuttles electrons from NADH, via FMN and iron-sulfur (Fe-S) centers, to quinones in the respiratory chain. The immediate electron acceptor for the enzyme in this species is believed to be ubiquinone. Couples the redox reaction to proton translocation (for every two electrons transferred, four hydrogen ions are translocated across the cytoplasmic membrane), and thus conserves the redox energy in a proton gradient. This chain is NADH-quinone oxidoreductase subunit K 2, found in Geotalea uraniireducens (strain Rf4) (Geobacter uraniireducens).